The primary structure comprises 335 residues: Glyceraldehyde-3-phosphate dehydrogenase, cytosolic (335 aa).

NAD(+) is bound by residues 13–14 (RI), Asp35, and Arg80. Residues 151-153 (SCT), Thr182, 211-212 (TG), and Arg234 contribute to the D-glyceraldehyde 3-phosphate site. The active-site Nucleophile is Cys152. Asn316 contributes to the NAD(+) binding site.

This sequence belongs to the glyceraldehyde-3-phosphate dehydrogenase family. As to quaternary structure, homotetramer.

The protein localises to the cytoplasm. The enzyme catalyses D-glyceraldehyde 3-phosphate + phosphate + NAD(+) = (2R)-3-phospho-glyceroyl phosphate + NADH + H(+). It functions in the pathway carbohydrate degradation; glycolysis; pyruvate from D-glyceraldehyde 3-phosphate: step 1/5. The polypeptide is Glyceraldehyde-3-phosphate dehydrogenase, cytosolic (GAPC) (Chondrus crispus (Carrageen Irish moss)).